Reading from the N-terminus, the 457-residue chain is Chromosomal replication initiator protein DnaA (457 aa).

Residues 1–90 form a domain I, interacts with DnaA modulators region; sequence MAVSLWQQCI…RPSAKPQAPA (90 aa). Residues 79–120 form a disordered region; sequence GSRPSAKPQAPAPAAVKAAAPQPKPGNSFVSQPEPAVSNHRS. Residues 84-99 are compositionally biased toward low complexity; the sequence is AKPQAPAPAAVKAAAP. The tract at residues 91–120 is domain II; the sequence is PAAVKAAAPQPKPGNSFVSQPEPAVSNHRS. Positions 121–337 are domain III, AAA+ region; the sequence is NINPTYQFDN…GALNRVIANA (217 aa). G165, G167, K168, and T169 together coordinate ATP. Positions 338–457 are domain IV, binds dsDNA; it reads NFTGRPITID…YANLIRTLSS (120 aa).

It belongs to the DnaA family. As to quaternary structure, oligomerizes as a right-handed, spiral filament on DNA at oriC.

The protein localises to the cytoplasm. Its function is as follows. Plays an essential role in the initiation and regulation of chromosomal replication. ATP-DnaA binds to the origin of replication (oriC) to initiate formation of the DNA replication initiation complex once per cell cycle. Binds the DnaA box (a 9 base pair repeat at the origin) and separates the double-stranded (ds)DNA. Forms a right-handed helical filament on oriC DNA; dsDNA binds to the exterior of the filament while single-stranded (ss)DNA is stabiized in the filament's interior. The ATP-DnaA-oriC complex binds and stabilizes one strand of the AT-rich DNA unwinding element (DUE), permitting loading of DNA polymerase. After initiation quickly degrades to an ADP-DnaA complex that is not apt for DNA replication. Binds acidic phospholipids. This is Chromosomal replication initiator protein DnaA from Shewanella amazonensis (strain ATCC BAA-1098 / SB2B).